The chain runs to 453 residues: Glutamyl-tRNA reductase (453 aa).

Substrate-binding positions include 54-57, Ser-113, 118-120, and Gln-124; these read TCNR and EAQ. Cys-55 serves as the catalytic Nucleophile. NADP(+) is bound at residue 193–198; it reads GGGEVS.

This sequence belongs to the glutamyl-tRNA reductase family. As to quaternary structure, homodimer.

It carries out the reaction (S)-4-amino-5-oxopentanoate + tRNA(Glu) + NADP(+) = L-glutamyl-tRNA(Glu) + NADPH + H(+). It functions in the pathway porphyrin-containing compound metabolism; protoporphyrin-IX biosynthesis; 5-aminolevulinate from L-glutamyl-tRNA(Glu): step 1/2. The protein operates within porphyrin-containing compound metabolism; chlorophyll biosynthesis. Catalyzes the NADPH-dependent reduction of glutamyl-tRNA(Glu) to glutamate 1-semialdehyde (GSA). This Chloroflexus aggregans (strain MD-66 / DSM 9485) protein is Glutamyl-tRNA reductase.